The chain runs to 400 residues: Argininosuccinate synthase (400 aa).

ATP-binding positions include A10–S18 and A38. L-citrulline is bound at residue Y89. G119 lines the ATP pocket. L-aspartate-binding residues include T121, N125, and D126. N125 is an L-citrulline binding site. L-citrulline is bound by residues R129, S177, E262, and Y274.

The protein belongs to the argininosuccinate synthase family. Type 1 subfamily. As to quaternary structure, homotetramer.

It is found in the cytoplasm. It catalyses the reaction L-citrulline + L-aspartate + ATP = 2-(N(omega)-L-arginino)succinate + AMP + diphosphate + H(+). It functions in the pathway amino-acid biosynthesis; L-arginine biosynthesis; L-arginine from L-ornithine and carbamoyl phosphate: step 2/3. The polypeptide is Argininosuccinate synthase (Trichodesmium erythraeum (strain IMS101)).